Here is a 205-residue protein sequence, read N- to C-terminus: MSIMSYNGGAVMAMKGKNCVAIAADRRFGIQAQMVTTDFQKIFPMGDRLYIGLAGLATDVQTVAQRLKFRLNLYELKEGRQIKPYTLMSMVANLLYEKRFGPYYTEPVIAGLDPKTFKPFICSLDLIGCPMVTDDFVVSGTCTEQMYGMCESLWEPNMDPEHLFETISQAMLNAVDRDAVSGMGVIVHIIEKDKITTRTLKARMD.

At Ser2 the chain carries N-acetylserine. Position 77 is an N6-acetyllysine (Lys77).

This sequence belongs to the peptidase T1B family. The 26S proteasome consists of a 20S proteasome core and two 19S regulatory subunits. The 20S proteasome core is a barrel-shaped complex made of 28 subunits that are arranged in four stacked rings. The two outer rings are each formed by seven alpha subunits, and the two inner rings are formed by seven beta subunits. The proteolytic activity is exerted by three beta-subunits PSMB5, PSMB6 and PSMB7.

Its subcellular location is the cytoplasm. It localises to the nucleus. Functionally, non-catalytic component of the 20S core proteasome complex involved in the proteolytic degradation of most intracellular proteins. This complex plays numerous essential roles within the cell by associating with different regulatory particles. Associated with two 19S regulatory particles, forms the 26S proteasome and thus participates in the ATP-dependent degradation of ubiquitinated proteins. The 26S proteasome plays a key role in the maintenance of protein homeostasis by removing misfolded or damaged proteins that could impair cellular functions, and by removing proteins whose functions are no longer required. Associated with the PA200 or PA28, the 20S proteasome mediates ubiquitin-independent protein degradation. This type of proteolysis is required in several pathways including spermatogenesis (20S-PA200 complex) or generation of a subset of MHC class I-presented antigenic peptides (20S-PA28 complex). This chain is Proteasome subunit beta type-3 (PSMB3), found in Bos taurus (Bovine).